The following is a 470-amino-acid chain: Heparan-sulfate 6-O-sulfotransferase 3 (470 aa).

Residues 1-4 (MDER) are Cytoplasmic-facing. A helical; Signal-anchor for type II membrane protein membrane pass occupies residues 5-27 (FNKWLLTPVLTLLFVVIMYQYVS). Over 28–470 (PSCTSSCTNF…EDYNSQVVRW (443 aa)) the chain is Lumenal. Positions 36-121 (NFGEQLRSGE…EAPENGSLPR (86 aa)) are disordered. The span at 88-113 (PEDEDEDPGDPEEEEEEEEEEPDPEA) shows a compositional bias: acidic residues. N-linked (GlcNAc...) asparagine glycans are attached at residues asparagine 116 and asparagine 127. Residue 151 to 159 (HIQKTGGTT) coordinates 3'-phosphoadenylyl sulfate. Substrate-binding positions include 181–182 (KK), arginine 198, tryptophan 203, and histidine 208. The Proton acceptor role is filled by histidine 208. An N-linked (GlcNAc...) asparagine glycan is attached at asparagine 230. 3'-phosphoadenylyl sulfate-binding residues include arginine 244 and serine 252. Positions 256 and 263 each coordinate substrate. Residues asparagine 323 and asparagine 328 are each glycosylated (N-linked (GlcNAc...) asparagine). 376-378 (TQF) serves as a coordination point for 3'-phosphoadenylyl sulfate. Asparagine 379 carries N-linked (GlcNAc...) asparagine glycosylation. 382-383 (RA) contacts 3'-phosphoadenylyl sulfate. Residues 421–453 (TKQLEHQRDRQKRREERRLQREHRAHRWPKEDR) are disordered. Over residues 422 to 439 (KQLEHQRDRQKRREERRL) the composition is skewed to basic and acidic residues.

The protein belongs to the sulfotransferase 6 family. In terms of tissue distribution, ubiquitously expressed.

The protein localises to the membrane. It carries out the reaction alpha-D-glucosaminyl-[heparan sulfate](n) + 3'-phosphoadenylyl sulfate = 6-sulfo-alpha-D-glucosaminyl-[heparan sulfate](n) + adenosine 3',5'-bisphosphate + H(+). Functionally, 6-O-sulfation enzyme which catalyzes the transfer of sulfate from 3'-phosphoadenosine 5'-phosphosulfate (PAPS) to position 6 of the N-sulfoglucosamine residue (GlcNS) of heparan sulfate. This is Heparan-sulfate 6-O-sulfotransferase 3 (Hs6st3) from Mus musculus (Mouse).